An 880-amino-acid chain; its full sequence is Lon protease (880 aa).

The tract at residues 1–37 is disordered; sequence MADYNDKNYLLHMSGPDSDTGPGIENEDPRAVENPGH. Residues 27–37 show a composition bias toward basic and acidic residues; it reads EDPRAVENPGH. Residues 57–251 enclose the Lon N-terminal domain; the sequence is LPILPVRDVV…LVNTQLQREV (195 aa). An ATP-binding site is contributed by 404–411; the sequence is GPPGVGKT. The Lon proteolytic domain maps to 640–821; the sequence is KLMPGMALGL…DELLPLVFEG (182 aa). Active-site residues include Ser727 and Lys770. Over residues 826-836 the composition is skewed to gly residues; it reads GGVSGAGQAGD. Residues 826 to 880 form a disordered region; it reads GGVSGAGQAGDKGGKSKAAAGKKDVVAARPAKPAAPARRRKDKTEDELPTAEAGA. Residues 852–861 are compositionally biased toward low complexity; sequence AARPAKPAAP.

This sequence belongs to the peptidase S16 family. Homohexamer. Organized in a ring with a central cavity.

Its subcellular location is the cytoplasm. The enzyme catalyses Hydrolysis of proteins in presence of ATP.. In terms of biological role, ATP-dependent serine protease that mediates the selective degradation of mutant and abnormal proteins as well as certain short-lived regulatory proteins. Required for cellular homeostasis and for survival from DNA damage and developmental changes induced by stress. Degrades polypeptides processively to yield small peptide fragments that are 5 to 10 amino acids long. Binds to DNA in a double-stranded, site-specific manner. This is Lon protease from Desulfovibrio desulfuricans (strain ATCC 27774 / DSM 6949 / MB).